A 438-amino-acid chain; its full sequence is Iroquois-class homeodomain protein IRX-6 (438 aa).

Positions 143–205 (SAGRRKNATR…NARRRLKKEN (63 aa)) form a DNA-binding region, homeobox. 2 disordered regions span residues 205–270 (NKMT…EAAV) and 388–438 (PRDS…GAEG). Residues 214–223 (KGGEERKADS) are compositionally biased toward basic and acidic residues. Residues 252–268 (LEDLEEEEEEEEAEEEA) are compositionally biased toward acidic residues.

This sequence belongs to the TALE/IRO homeobox family. Expressed in a subset of retinal ganglion cells and bipolar cells; including in type 2 and type 3a bipolar cells.

Its subcellular location is the nucleus. Functionally, transcription factor. Binds to the iroquois binding site (IBS) motif of target genes to regulate gene expression; functions as a transcriptional activator or repressor. Modulates expression of RCVRN, VSX1, BHLHE22/BHLHB5 and TACR3/Nk3r. Required downstream of retinal bipolar cell specification for the terminal differentiation of type 2, type 3a and possibly type 6 bipolar cells. This chain is Iroquois-class homeodomain protein IRX-6 (Irx6), found in Mus musculus (Mouse).